The primary structure comprises 206 residues: Small ribosomal subunit protein uS4 (206 aa).

Positions Gly-96–Lys-156 constitute an S4 RNA-binding domain.

It belongs to the universal ribosomal protein uS4 family. Part of the 30S ribosomal subunit. Contacts protein S5. The interaction surface between S4 and S5 is involved in control of translational fidelity.

One of the primary rRNA binding proteins, it binds directly to 16S rRNA where it nucleates assembly of the body of the 30S subunit. Its function is as follows. With S5 and S12 plays an important role in translational accuracy. The protein is Small ribosomal subunit protein uS4 of Actinobacillus succinogenes (strain ATCC 55618 / DSM 22257 / CCUG 43843 / 130Z).